The primary structure comprises 320 residues: ATP phosphoribosyltransferase (320 aa).

Belongs to the ATP phosphoribosyltransferase family. Long subfamily. The cofactor is Mg(2+).

It is found in the cytoplasm. The catalysed reaction is 1-(5-phospho-beta-D-ribosyl)-ATP + diphosphate = 5-phospho-alpha-D-ribose 1-diphosphate + ATP. Its pathway is amino-acid biosynthesis; L-histidine biosynthesis; L-histidine from 5-phospho-alpha-D-ribose 1-diphosphate: step 1/9. With respect to regulation, feedback inhibited by histidine. Functionally, catalyzes the condensation of ATP and 5-phosphoribose 1-diphosphate to form N'-(5'-phosphoribosyl)-ATP (PR-ATP). Has a crucial role in the pathway because the rate of histidine biosynthesis seems to be controlled primarily by regulation of HisG enzymatic activity. The polypeptide is ATP phosphoribosyltransferase (hisG) (Caulobacter vibrioides (strain ATCC 19089 / CIP 103742 / CB 15) (Caulobacter crescentus)).